The following is a 257-amino-acid chain: Adenosylcobinamide-GDP ribazoletransferase (257 aa).

7 consecutive transmembrane segments (helical) span residues 30–50, 52–72, 109–129, 132–152, 175–195, 198–218, and 237–257; these read IVYF…IGWI, MLLF…VLIT, SLLA…DIIS, SLWV…LLTY, LITA…FIFL, NIVL…IILF, and GIEL…FMFF.

The protein belongs to the CobS family. Requires Mg(2+) as cofactor.

It is found in the cell membrane. The enzyme catalyses alpha-ribazole + adenosylcob(III)inamide-GDP = adenosylcob(III)alamin + GMP + H(+). The catalysed reaction is alpha-ribazole 5'-phosphate + adenosylcob(III)inamide-GDP = adenosylcob(III)alamin 5'-phosphate + GMP + H(+). Its pathway is cofactor biosynthesis; adenosylcobalamin biosynthesis; adenosylcobalamin from cob(II)yrinate a,c-diamide: step 7/7. In terms of biological role, joins adenosylcobinamide-GDP and alpha-ribazole to generate adenosylcobalamin (Ado-cobalamin). Also synthesizes adenosylcobalamin 5'-phosphate from adenosylcobinamide-GDP and alpha-ribazole 5'-phosphate. In Clostridioides difficile (strain 630) (Peptoclostridium difficile), this protein is Adenosylcobinamide-GDP ribazoletransferase.